The chain runs to 332 residues: Adenine deaminase (332 aa).

Positions 14, 16, and 194 each coordinate Zn(2+). Glu197 acts as the Proton donor in catalysis. Asp275 provides a ligand contact to Zn(2+). Asp276 provides a ligand contact to substrate.

The protein belongs to the metallo-dependent hydrolases superfamily. Adenosine and AMP deaminases family. Adenine deaminase type 2 subfamily. Zn(2+) is required as a cofactor.

The enzyme catalyses adenine + H2O + H(+) = hypoxanthine + NH4(+). Its function is as follows. Catalyzes the hydrolytic deamination of adenine to hypoxanthine. Plays an important role in the purine salvage pathway and in nitrogen catabolism. The sequence is that of Adenine deaminase from Psychrobacter cryohalolentis (strain ATCC BAA-1226 / DSM 17306 / VKM B-2378 / K5).